Reading from the N-terminus, the 316-residue chain is MRLVFMGTPDFAVPTLEAIVAAGHEVALVVTRPDRPRGRGQKPQPSPVKEAALRLGLPVDHPACLDNEFVQKLKDLGVEAGVVVAFGRILPPRLLDAFPQRWINVHASLLPKYRGAAPIHRAVIDGEKETGITTMLMSEGLDEGDMLLKRSLAIGPDDTTGQVHDALAELGARLLVETLAAMEAGRLQPQPQDGSQASYAPMLARADEQVDWSAPAEAVHNRVRGMNPWPGAFTMDEGKILKILRGRLRHEGLPLPDPTGSAAHPGEILQIVGDEVAVATGAGVYWLSEVRPAGGKTMTAGAYARGRRIGPGFRFG.

108-111 (SLLP) serves as a coordination point for (6S)-5,6,7,8-tetrahydrofolate.

This sequence belongs to the Fmt family.

The enzyme catalyses L-methionyl-tRNA(fMet) + (6R)-10-formyltetrahydrofolate = N-formyl-L-methionyl-tRNA(fMet) + (6S)-5,6,7,8-tetrahydrofolate + H(+). In terms of biological role, attaches a formyl group to the free amino group of methionyl-tRNA(fMet). The formyl group appears to play a dual role in the initiator identity of N-formylmethionyl-tRNA by promoting its recognition by IF2 and preventing the misappropriation of this tRNA by the elongation apparatus. The polypeptide is Methionyl-tRNA formyltransferase (Heliobacterium modesticaldum (strain ATCC 51547 / Ice1)).